We begin with the raw amino-acid sequence, 506 residues long: 2-isopropylmalate synthase (506 aa).

One can recognise a Pyruvate carboxyltransferase domain in the interval 8–272 (LIVFDTTLRD…ETGIQLKEIL (265 aa)). Residues Asp17, His206, His208, and Asn242 each contribute to the Mn(2+) site. Positions 396–506 (ELEYVAVTVC…YLNAVNKALL (111 aa)) are regulatory domain.

The protein belongs to the alpha-IPM synthase/homocitrate synthase family. LeuA type 1 subfamily. In terms of assembly, homodimer. It depends on Mn(2+) as a cofactor.

It is found in the cytoplasm. The catalysed reaction is 3-methyl-2-oxobutanoate + acetyl-CoA + H2O = (2S)-2-isopropylmalate + CoA + H(+). The protein operates within amino-acid biosynthesis; L-leucine biosynthesis; L-leucine from 3-methyl-2-oxobutanoate: step 1/4. Its function is as follows. Catalyzes the condensation of the acetyl group of acetyl-CoA with 3-methyl-2-oxobutanoate (2-ketoisovalerate) to form 3-carboxy-3-hydroxy-4-methylpentanoate (2-isopropylmalate). This is 2-isopropylmalate synthase from Methylacidiphilum infernorum (isolate V4) (Methylokorus infernorum (strain V4)).